A 270-amino-acid chain; its full sequence is Formamidopyrimidine-DNA glycosylase (270 aa).

P2 functions as the Schiff-base intermediate with DNA in the catalytic mechanism. E3 functions as the Proton donor in the catalytic mechanism. Catalysis depends on K58, which acts as the Proton donor; for beta-elimination activity. DNA contacts are provided by H91, R110, and K151. The segment at 236–270 adopts an FPG-type zinc-finger fold; that stretch reads FVYGRGGEACKVCGTELRNVVLGQRASVFCPRCQR. R260 (proton donor; for delta-elimination activity) is an active-site residue.

This sequence belongs to the FPG family. In terms of assembly, monomer. The cofactor is Zn(2+).

It catalyses the reaction Hydrolysis of DNA containing ring-opened 7-methylguanine residues, releasing 2,6-diamino-4-hydroxy-5-(N-methyl)formamidopyrimidine.. The enzyme catalyses 2'-deoxyribonucleotide-(2'-deoxyribose 5'-phosphate)-2'-deoxyribonucleotide-DNA = a 3'-end 2'-deoxyribonucleotide-(2,3-dehydro-2,3-deoxyribose 5'-phosphate)-DNA + a 5'-end 5'-phospho-2'-deoxyribonucleoside-DNA + H(+). Its function is as follows. Involved in base excision repair of DNA damaged by oxidation or by mutagenic agents. Acts as a DNA glycosylase that recognizes and removes damaged bases. Has a preference for oxidized purines, such as 7,8-dihydro-8-oxoguanine (8-oxoG). Has AP (apurinic/apyrimidinic) lyase activity and introduces nicks in the DNA strand. Cleaves the DNA backbone by beta-delta elimination to generate a single-strand break at the site of the removed base with both 3'- and 5'-phosphates. The polypeptide is Formamidopyrimidine-DNA glycosylase (Pseudomonas fluorescens (strain SBW25)).